A 100-amino-acid chain; its full sequence is NADH-quinone oxidoreductase subunit K (100 aa).

A run of 3 helical transmembrane segments spans residues 2–22, 29–49, and 63–83; these read ITLTHYLILSAILFSIALVGI, LMLFFATEIALNAVNIALAAF, and FFIIAIAASEVAVGLGLLIIW.

This sequence belongs to the complex I subunit 4L family. In terms of assembly, NDH-1 is composed of 14 different subunits. Subunits NuoA, H, J, K, L, M, N constitute the membrane sector of the complex.

The protein resides in the cell inner membrane. It catalyses the reaction a quinone + NADH + 5 H(+)(in) = a quinol + NAD(+) + 4 H(+)(out). NDH-1 shuttles electrons from NADH, via FMN and iron-sulfur (Fe-S) centers, to quinones in the respiratory chain. The immediate electron acceptor for the enzyme in this species is believed to be ubiquinone. Couples the redox reaction to proton translocation (for every two electrons transferred, four hydrogen ions are translocated across the cytoplasmic membrane), and thus conserves the redox energy in a proton gradient. In Nitratiruptor sp. (strain SB155-2), this protein is NADH-quinone oxidoreductase subunit K.